The following is a 319-amino-acid chain: Serine/threonine-protein phosphatase PP1 isozyme 2 (319 aa).

Mn(2+) contacts are provided by Asp61, His63, Asp89, and Asn121. The active-site Proton donor is the His122. Mn(2+) contacts are provided by His170 and His245.

This sequence belongs to the PPP phosphatase family. PP-1 subfamily. Mn(2+) is required as a cofactor.

The enzyme catalyses O-phospho-L-seryl-[protein] + H2O = L-seryl-[protein] + phosphate. It catalyses the reaction O-phospho-L-threonyl-[protein] + H2O = L-threonyl-[protein] + phosphate. This chain is Serine/threonine-protein phosphatase PP1 isozyme 2, found in Acetabularia peniculus (Green alga).